The primary structure comprises 551 residues: MEEELPLFSGDSGKPVQATLSSLKMLDVGKWPIFSLCSEEELQLIRQACVFGSAGNEVLYTTVNDEIFVLGTNCCGCLGLGDVQSTIEPRRLDSLNGKKIACLSYGSGPHIVLATTEGEVFTWGHNAYSQLGNGTTNHGLVPCHISTNLSNKQVIEVACGSYHSLVLTSDGEVFAWGYNNSGQVGSGSTVNQPIPRRVTGCLQNKVVVTIACGQMCCMAVVDTGEVYVWGYNGNGQLGLGNSGNQPTPCRVAALQGIRVQRVACGYAHTLVLTDEGQVYAWGANSYGQLGTGNKSNQSYPTPVTVEKDRIIEIAACHSTHTSAAKTQGGHVYMWGQCRGQSVILPHLTHFSCTDDVFACFATPAVTWRLLSVEPDDHLTVAESLKREFDNPDTADLKFLVDGKYIYAHKVLLKIRCEHFRSSLEDNEDDIVEMSEFSYPVYRAFLEYLYTDSISLSPEEAVGLLDLATFYRENRLKKLCQQTIKQGICEENAIALLSAAVKYDAQDLEEFCFRFCINHLTVVTQTSGFAEMDHDLLKNFISKASRVGAFKN.

6 RCC1 repeats span residues 64-115, 117-169, 171-222, 223-274, 276-326, and 328-382; these read NDEI…VLAT, EGEV…VLTS, GEVF…AVVD, TGEV…VLTD, GQVY…AAKT, and GGHV…TVAE. A BTB domain is found at 394 to 457; sequence ADLKFLVDGK…LYTDSISLSP (64 aa).

It is found in the cytoplasmic vesicle. Its subcellular location is the secretory vesicle. The protein localises to the acrosome. The sequence is that of RCC1 and BTB domain-containing protein 2 (RCBTB2) from Homo sapiens (Human).